A 396-amino-acid chain; its full sequence is Elongation factor Tu (396 aa).

The tr-type G domain maps to 10-206 (KPHVNVGTIG…ALDNYIPLPE (197 aa)). Residues 19–26 (GHVDHGKT) form a G1 region. 19-26 (GHVDHGKT) contributes to the GTP binding site. Thr-26 contributes to the Mg(2+) binding site. Residues 60 to 64 (GITIN) are G2. The tract at residues 81-84 (DCPG) is G3. GTP is bound by residues 81–85 (DCPGH) and 136–139 (NKCD). The segment at 136–139 (NKCD) is G4. The tract at residues 174–176 (SAK) is G5.

This sequence belongs to the TRAFAC class translation factor GTPase superfamily. Classic translation factor GTPase family. EF-Tu/EF-1A subfamily. As to quaternary structure, monomer.

Its subcellular location is the cytoplasm. The catalysed reaction is GTP + H2O = GDP + phosphate + H(+). GTP hydrolase that promotes the GTP-dependent binding of aminoacyl-tRNA to the A-site of ribosomes during protein biosynthesis. The sequence is that of Elongation factor Tu from Polaromonas naphthalenivorans (strain CJ2).